Reading from the N-terminus, the 756-residue chain is 5-methyltetrahydropteroyltriglutamate--homocysteine methyltransferase (756 aa).

5-methyltetrahydropteroyltri-L-glutamate-binding positions include 15 to 18 and lysine 111; that span reads REWK. The interval 392–411 is disordered; sequence GAATSHNLENKKRPQSFNER. The span at 399–411 shows a compositional bias: basic and acidic residues; sequence LENKKRPQSFNER. L-homocysteine-binding positions include 429-431 and glutamate 482; that span reads IGS. L-methionine-binding positions include 429-431 and glutamate 482; that span reads IGS. 5-methyltetrahydropteroyltri-L-glutamate-binding positions include 513–514 and tryptophan 559; that span reads RC. L-homocysteine is bound at residue aspartate 597. An L-methionine-binding site is contributed by aspartate 597. A 5-methyltetrahydropteroyltri-L-glutamate-binding site is contributed by glutamate 603. Zn(2+) contacts are provided by histidine 639, cysteine 641, and glutamate 663. Histidine 692 acts as the Proton donor in catalysis. Cysteine 724 serves as a coordination point for Zn(2+).

This sequence belongs to the vitamin-B12 independent methionine synthase family. It depends on Zn(2+) as a cofactor.

The enzyme catalyses 5-methyltetrahydropteroyltri-L-glutamate + L-homocysteine = tetrahydropteroyltri-L-glutamate + L-methionine. It participates in amino-acid biosynthesis; L-methionine biosynthesis via de novo pathway; L-methionine from L-homocysteine (MetE route): step 1/1. In terms of biological role, catalyzes the transfer of a methyl group from 5-methyltetrahydrofolate to homocysteine resulting in methionine formation. This Halalkalibacterium halodurans (strain ATCC BAA-125 / DSM 18197 / FERM 7344 / JCM 9153 / C-125) (Bacillus halodurans) protein is 5-methyltetrahydropteroyltriglutamate--homocysteine methyltransferase.